The sequence spans 371 residues: Cytochrome b (371 aa).

4 helical membrane passes run 25–45 (FGSMLLTCLMLQVLTGFFLAI), 69–90 (WIMQNTHAIGASLFFICIYIHI), 105–125 (WLSGVTLLMTLMATAFFGYVL), and 170–190 (FFALHFILPFIIISLSSIHII). Heme b contacts are provided by histidine 75 and histidine 89. The heme b site is built by histidine 174 and histidine 188. Histidine 193 contributes to the a ubiquinone binding site. The next 4 helical transmembrane spans lie at 218–238 (YKDLMTTTSMIILLFIILSFS), 280–300 (LGGTLALLMSILILTLPPFTH), 312–332 (LSQTLFWTLIATFVMITWTAT), and 339–358 (FITISQLTSIFYFSFFIMNP).

It belongs to the cytochrome b family. The cytochrome bc1 complex contains 3 respiratory subunits (MT-CYB, CYC1 and UQCRFS1), 2 core proteins (UQCRC1 and UQCRC2) and probably 6 low-molecular weight proteins. Requires heme b as cofactor.

Its subcellular location is the mitochondrion inner membrane. Component of the ubiquinol-cytochrome c reductase complex (complex III or cytochrome b-c1 complex) that is part of the mitochondrial respiratory chain. The b-c1 complex mediates electron transfer from ubiquinol to cytochrome c. Contributes to the generation of a proton gradient across the mitochondrial membrane that is then used for ATP synthesis. The polypeptide is Cytochrome b (MT-CYB) (Micrurus fulvius (Eastern coral snake)).